Reading from the N-terminus, the 206-residue chain is Superoxide dismutase [Mn] (206 aa).

Mn(2+) is bound by residues histidine 30, histidine 78, aspartate 166, and histidine 170.

It belongs to the iron/manganese superoxide dismutase family. Homodimer. The cofactor is Mn(2+).

It catalyses the reaction 2 superoxide + 2 H(+) = H2O2 + O2. Functionally, destroys superoxide anion radicals which are normally produced within the cells and which are toxic to biological systems. This chain is Superoxide dismutase [Mn] (sodA), found in Chlamydia trachomatis serovar D (strain ATCC VR-885 / DSM 19411 / UW-3/Cx).